Reading from the N-terminus, the 632-residue chain is Glycerophosphodiester phosphodiesterase domain-containing protein 4 (632 aa).

Residues 1-64 (MEETQDSSSS…GSCCCSRKEQ (64 aa)) lie on the Cytoplasmic side of the membrane. A helical membrane pass occupies residues 65–85 (FFYMCLVIAFILSVLFLFVWV). The Extracellular portion of the chain corresponds to 86-114 (ETSNEYNGFDWVVYLGTGCWFFWSILVLS). A helical membrane pass occupies residues 115–135 (AAGIMVAYTTLLLLLGFLLLW). At 136 to 147 (ERIELNLHTSHK) the chain is on the cytoplasmic side. A helical membrane pass occupies residues 148–168 (VFICLVIVLCSFLLAVLSHFW). The Extracellular portion of the chain corresponds to 169 to 180 (KDKWLIAGLSLQ). A helical transmembrane segment spans residues 181–201 (IFAPFVHLSLITVMIIISWPL). The Cytoplasmic portion of the chain corresponds to 202 to 240 (SICVARLESEVKVRRYRMADYEQEIQERCNVFQRLRALQ). The chain crosses the membrane as a helical span at residues 241–261 (IAAGLSFLIILLCLYLMPLGI). At 262–542 (YSPCILKKEN…SRPLFFMTPG (281 aa)) the chain is on the extracellular side. Residues 276–533 (PTLFGHRGAP…DNIELLNQLS (258 aa)) form the GP-PDE domain. Residues E308, D310, and H323 each contribute to the a divalent metal cation site. N343, N349, N384, and N473 each carry an N-linked (GlcNAc...) asparagine glycan. The chain crosses the membrane as a helical span at residues 543–563 (FYMFMWLFLDIASAVIIGFVF). Residues 564-632 (CYNWIKEIKR…QKTEPKTENL (69 aa)) are Cytoplasmic-facing. The segment at 596–632 (ENNDASQQKPEVAPTSANLAPENMIELQKTEPKTENL) is disordered. Over residues 623 to 632 (QKTEPKTENL) the composition is skewed to basic and acidic residues.

The protein belongs to the glycerophosphoryl diester phosphodiesterase family. In terms of tissue distribution, detected in testis, in particular in spermatocytes.

Its subcellular location is the cytoplasm. It localises to the membrane. This Mus musculus (Mouse) protein is Glycerophosphodiester phosphodiesterase domain-containing protein 4 (Gdpd4).